A 422-amino-acid polypeptide reads, in one-letter code: UDP-N-acetylglucosamine 1-carboxyvinyltransferase (422 aa).

22 to 23 (KN) is a phosphoenolpyruvate binding site. A UDP-N-acetyl-alpha-D-glucosamine-binding site is contributed by arginine 95. Residue cysteine 119 is the Proton donor of the active site. Cysteine 119 is modified (2-(S-cysteinyl)pyruvic acid O-phosphothioketal). UDP-N-acetyl-alpha-D-glucosamine-binding positions include 124 to 128 (RPIDQ), aspartate 309, and valine 331.

It belongs to the EPSP synthase family. MurA subfamily.

It is found in the cytoplasm. It catalyses the reaction phosphoenolpyruvate + UDP-N-acetyl-alpha-D-glucosamine = UDP-N-acetyl-3-O-(1-carboxyvinyl)-alpha-D-glucosamine + phosphate. Its pathway is cell wall biogenesis; peptidoglycan biosynthesis. Cell wall formation. Adds enolpyruvyl to UDP-N-acetylglucosamine. The polypeptide is UDP-N-acetylglucosamine 1-carboxyvinyltransferase (Anaeromyxobacter dehalogenans (strain 2CP-1 / ATCC BAA-258)).